A 214-amino-acid chain; its full sequence is Ribosomal RNA small subunit methyltransferase G (214 aa).

Residues Gly-77, Phe-82, 128–129 (VE), and Arg-143 contribute to the S-adenosyl-L-methionine site.

This sequence belongs to the methyltransferase superfamily. RNA methyltransferase RsmG family.

The protein resides in the cytoplasm. The catalysed reaction is guanosine(527) in 16S rRNA + S-adenosyl-L-methionine = N(7)-methylguanosine(527) in 16S rRNA + S-adenosyl-L-homocysteine. Specifically methylates the N7 position of guanine in position 527 of 16S rRNA. In Nitrosomonas europaea (strain ATCC 19718 / CIP 103999 / KCTC 2705 / NBRC 14298), this protein is Ribosomal RNA small subunit methyltransferase G.